A 323-amino-acid chain; its full sequence is Formimidoylglutamase (323 aa).

Mn(2+) contacts are provided by His-131, Asp-157, His-159, Asp-161, Cys-245, and Asp-247.

This sequence belongs to the arginase family. It depends on Mn(2+) as a cofactor.

It catalyses the reaction N-formimidoyl-L-glutamate + H2O = formamide + L-glutamate. Its pathway is amino-acid degradation; L-histidine degradation into L-glutamate; L-glutamate from N-formimidoyl-L-glutamate (hydrolase route): step 1/1. Catalyzes the conversion of N-formimidoyl-L-glutamate to L-glutamate and formamide. In Geobacillus kaustophilus (strain HTA426), this protein is Formimidoylglutamase.